Reading from the N-terminus, the 156-residue chain is Transcription elongation factor GreA (156 aa).

The stretch at 1-32 (MKKVRLTREGYEKLKQELEELKRKFMYEISER) forms a coiled coil.

Belongs to the GreA/GreB family.

Necessary for efficient RNA polymerase transcription elongation past template-encoded arresting sites. The arresting sites in DNA have the property of trapping a certain fraction of elongating RNA polymerases that pass through, resulting in locked ternary complexes. Cleavage of the nascent transcript by cleavage factors such as GreA or GreB allows the resumption of elongation from the new 3'terminus. GreA releases sequences of 2 to 3 nucleotides. In Thermotoga neapolitana (strain ATCC 49049 / DSM 4359 / NBRC 107923 / NS-E), this protein is Transcription elongation factor GreA.